A 600-amino-acid chain; its full sequence is Terpenoid synthase 8 (600 aa).

The Mg(2+) site is built by Asp-352, Asp-356, Asn-497, and Asp-505. Residues 352 to 356 (DDTCD) carry the DDXXD motif motif.

This sequence belongs to the terpene synthase family. Tpsa subfamily. Mg(2+) serves as cofactor. It depends on Mn(2+) as a cofactor. Stele, and tips of primary and secondary root.

It localises to the plastid. The catalysed reaction is (2E,6E,10E)-geranylgeranyl diphosphate = rhizathalene A + diphosphate. It functions in the pathway secondary metabolite biosynthesis; terpenoid biosynthesis. Functionally, catalyzes the synthesis of the semivolatile diterpene rhizatalene A. The protein is Terpenoid synthase 8 (TPS08) of Arabidopsis thaliana (Mouse-ear cress).